The sequence spans 112 residues: ATP synthase epsilon chain (112 aa).

The protein belongs to the ATPase epsilon chain family. In terms of assembly, F-type ATPases have 2 components, CF(1) - the catalytic core - and CF(0) - the membrane proton channel. CF(1) has five subunits: alpha(3), beta(3), gamma(1), delta(1), epsilon(1). CF(0) has three main subunits: a, b and c.

It localises to the cell inner membrane. In terms of biological role, produces ATP from ADP in the presence of a proton gradient across the membrane. The protein is ATP synthase epsilon chain (atpC) of Rickettsia prowazekii (strain Madrid E).